Consider the following 604-residue polypeptide: Asparagine synthetase [glutamine-hydrolyzing] 1 (604 aa).

Catalysis depends on Cys-2, which acts as the Nucleophile. The region spanning 2 to 186 (CGILAVLGAA…PGHLYSSAAG (185 aa)) is the Glutamine amidotransferase type-2 domain. L-glutamine-binding positions include 50–54 (RLAIV), 75–77 (NGE), and Asp-99. An Asparagine synthetase domain is found at 211 to 451 (LREAFEKAVI…LPKHILYRQK (241 aa)). ATP-binding positions include Leu-232, Val-268, and 342–343 (SG).

The enzyme catalyses L-aspartate + L-glutamine + ATP + H2O = L-asparagine + L-glutamate + AMP + diphosphate + H(+). It functions in the pathway amino-acid biosynthesis; L-asparagine biosynthesis. In terms of biological role, essential for nitrogen assimilation, distribution and remobilization within the plant via the phloem. The protein is Asparagine synthetase [glutamine-hydrolyzing] 1 of Oryza sativa subsp. japonica (Rice).